Reading from the N-terminus, the 305-residue chain is GPI-anchored hemophore cfmA (305 aa).

An N-terminal signal peptide occupies residues 1 to 18 (MKASVSLLLLSAASMASA). In terms of domain architecture, CFEM spans 19 to 111 (AMSVSQCAQM…GSGSGSDSGS (93 aa)). Cystine bridges form between cysteine 25–cysteine 68, cysteine 29–cysteine 63, cysteine 42–cysteine 49, and cysteine 51–cysteine 84. Aspartate 46 contacts heme. The tract at residues 92-287 (TATGAGGSSS…STGNVAPRGA (196 aa)) is disordered. The span at 95-149 (GAGGSSSGSGSGSDSGSGSGSGSGSGSGSGSGSGSSSGSGSGSGSGSGSGSGSNS) shows a compositional bias: gly residues. Composition is skewed to low complexity over residues 150–186 (GSGS…NSTT), 196–259 (GASS…TATG), and 267–287 (GSAS…PRGA). 5 N-linked (GlcNAc...) asparagine glycosylation sites follow: asparagine 183, asparagine 203, asparagine 237, asparagine 243, and asparagine 275. Serine 276 carries GPI-like-anchor amidated serine lipidation. The propeptide at 277–305 (SSTGNVAPRGAVVGSGAVGALALAALIIL) is removed in mature form.

Belongs to the RBT5 family. In terms of processing, the GPI-like anchor contains a phosphoceramide lipid group. Post-translationally, the GPI-anchor is attached to the protein in the endoplasmic reticulum and serves to target the protein to the cell surface. There, the glucosamine-inositol phospholipid moiety is cleaved off and the GPI-modified mannoprotein is covalently attached via its lipidless GPI glycan remnant to the 1,6-beta-glucan of the outer cell wall layer.

Its subcellular location is the secreted. The protein localises to the cell wall. It localises to the cell membrane. Its function is as follows. GPI-anchored cell wall protein involved in stabilizing the cell wall. Not implicated in virulence, heme uptake and biofilm formation. The polypeptide is GPI-anchored hemophore cfmA (Aspergillus fumigatus (strain ATCC MYA-4609 / CBS 101355 / FGSC A1100 / Af293) (Neosartorya fumigata)).